Here is a 96-residue protein sequence, read N- to C-terminus: Co-chaperonin GroES (96 aa).

The protein belongs to the GroES chaperonin family. As to quaternary structure, heptamer of 7 subunits arranged in a ring. Interacts with the chaperonin GroEL.

The protein resides in the cytoplasm. Together with the chaperonin GroEL, plays an essential role in assisting protein folding. The GroEL-GroES system forms a nano-cage that allows encapsulation of the non-native substrate proteins and provides a physical environment optimized to promote and accelerate protein folding. GroES binds to the apical surface of the GroEL ring, thereby capping the opening of the GroEL channel. The sequence is that of Co-chaperonin GroES from Streptococcus pyogenes serotype M18 (strain MGAS8232).